We begin with the raw amino-acid sequence, 157 residues long: Small ribosomal subunit protein uS7 (157 aa).

It belongs to the universal ribosomal protein uS7 family. Part of the 30S ribosomal subunit. Contacts proteins S9 and S11.

One of the primary rRNA binding proteins, it binds directly to 16S rRNA where it nucleates assembly of the head domain of the 30S subunit. Is located at the subunit interface close to the decoding center, probably blocks exit of the E-site tRNA. This chain is Small ribosomal subunit protein uS7, found in Chlamydia pneumoniae (Chlamydophila pneumoniae).